We begin with the raw amino-acid sequence, 204 residues long: 3-isopropylmalate dehydratase small subunit (204 aa).

The protein belongs to the LeuD family. LeuD type 1 subfamily. In terms of assembly, heterodimer of LeuC and LeuD.

The enzyme catalyses (2R,3S)-3-isopropylmalate = (2S)-2-isopropylmalate. It functions in the pathway amino-acid biosynthesis; L-leucine biosynthesis; L-leucine from 3-methyl-2-oxobutanoate: step 2/4. Catalyzes the isomerization between 2-isopropylmalate and 3-isopropylmalate, via the formation of 2-isopropylmaleate. The sequence is that of 3-isopropylmalate dehydratase small subunit from Chloroflexus aggregans (strain MD-66 / DSM 9485).